Here is a 660-residue protein sequence, read N- to C-terminus: DNA mismatch repair protein MutL (660 aa).

The disordered stretch occupies residues 408-436; it reads DQTSASASVKHASRSQDENQLSEHPNLDF. The segment covering 425–436 has biased composition (polar residues); sequence ENQLSEHPNLDF.

Belongs to the DNA mismatch repair MutL/HexB family.

Functionally, this protein is involved in the repair of mismatches in DNA. It is required for dam-dependent methyl-directed DNA mismatch repair. May act as a 'molecular matchmaker', a protein that promotes the formation of a stable complex between two or more DNA-binding proteins in an ATP-dependent manner without itself being part of a final effector complex. The sequence is that of DNA mismatch repair protein MutL from Streptococcus uberis (strain ATCC BAA-854 / 0140J).